A 496-amino-acid chain; its full sequence is NADP-dependent glyceraldehyde-3-phosphate dehydrogenase (496 aa).

Residues Arg-116 and 169-170 contribute to the substrate site; that span reads NY. The NADP(+) site is built by Lys-192, Thr-195, and Asp-230. 245-249 serves as a coordination point for NAD(+); sequence GGDTG. Glu-264 acts as the Proton acceptor in catalysis. A substrate-binding site is contributed by 297–299; the sequence is RCT. Cys-298 (nucleophile) is an active-site residue. NADP(+) is bound at residue Glu-391. Arg-451 lines the substrate pocket.

Belongs to the aldehyde dehydrogenase family.

Its subcellular location is the cytoplasm. The catalysed reaction is D-glyceraldehyde 3-phosphate + NADP(+) + H2O = (2R)-3-phosphoglycerate + NADPH + 2 H(+). Functionally, important as a means of generating NADPH for biosynthetic reactions. The protein is NADP-dependent glyceraldehyde-3-phosphate dehydrogenase (GAPN) of Pisum sativum (Garden pea).